A 135-amino-acid chain; its full sequence is Large ribosomal subunit protein bL12c (135 aa).

The protein belongs to the bacterial ribosomal protein bL12 family. As to quaternary structure, homodimer. Part of the ribosomal stalk of the 50S ribosomal subunit. Forms a multimeric L10(L12)X complex, where L10 forms an elongated spine to which 2 to 4 L12 dimers bind in a sequential fashion. Binds GTP-bound translation factors.

Its subcellular location is the plastid. The protein resides in the chloroplast. Functionally, forms part of the ribosomal stalk which helps the ribosome interact with GTP-bound translation factors. Is thus essential for accurate translation. The protein is Large ribosomal subunit protein bL12c of Chara vulgaris (Common stonewort).